We begin with the raw amino-acid sequence, 347 residues long: DNA-directed RNA polymerase subunit alpha (347 aa).

Positions 1–230 (MFKGFQKPKR…DHMTIFINFE (230 aa)) are alpha N-terminal domain (alpha-NTD). The segment at 247–347 (MNEVLNRSVE…EDDGQDQIGE (101 aa)) is alpha C-terminal domain (alpha-CTD). The interval 320–347 (GRLVAPPPSAGGGPDFGPEDDGQDQIGE) is disordered. A compositionally biased stretch (acidic residues) spans 336–347 (GPEDDGQDQIGE).

This sequence belongs to the RNA polymerase alpha chain family. In terms of assembly, homodimer. The RNAP catalytic core consists of 2 alpha, 1 beta, 1 beta' and 1 omega subunit. When a sigma factor is associated with the core the holoenzyme is formed, which can initiate transcription.

It carries out the reaction RNA(n) + a ribonucleoside 5'-triphosphate = RNA(n+1) + diphosphate. DNA-dependent RNA polymerase catalyzes the transcription of DNA into RNA using the four ribonucleoside triphosphates as substrates. This chain is DNA-directed RNA polymerase subunit alpha, found in Solibacter usitatus (strain Ellin6076).